A 787-amino-acid chain; its full sequence is MVELESMSSSSEWFLNNNSNIHNNTHNHNHNNNNNNNNINSNNHGHSANSSAHNHNNNNNNNTNNNSNNSNNNNNNNNNNNNTQNTNNGTFLTPLPVLTNSSTGLGKSIDWLYTNTSNTDSHNINSSSNKVTKLSNGFSLLNQDGTQSPSCFLNLSSTGNHEDPVQVPMNNNPQDLLFQFNISPQLQSQNNNSSNNNNNNNNNGSNTPLNGSNGSNNNYSSPISPVPQYQHSAGSSPIQEYPYYSPSSSPHSNESTSPITVIKDSGSIINPINNNNNNNNNNNNNNNNNNNNNNNNNNKNNLNNNTFQFSSLKSTTGIAPPLQTDYHLLYNFVQQNFSGKPEDSLLNQTLNNNNNNNNNNNNNNNNTTIQTSPQPLVLPQIQNPFLPYNISTPISVPNNILSSAQSSTNSSPNNNNNNNNNNNNIFSTVNNNNNLVNNNSNNMELDVDKPFSQEKFYLHLKSIVPSFNENFEASSESAQSESSQESDYDALNERNSGVKKRGRDEDQIDTSGQVVLSREHVLKLSSKEIEEYVSRLKMHHILTQAEEKELKKQRRLVKNREYASQSRSRRKIYVENIETKLQKTNQDCASIKSQLNSVKEENKALKKQLYSLTNTLKSNPSLAEAFGKIFSPIGNNKTSSATLFVFFFLFTFTFLFQSSTVTFNSDRVSSIQRNLLSLEETQATEWNIKRAILEETKQYVDSLLTSLYTSKLQSLSETPLDTSNYIINNNNNESTSETTTNNKVVSTSSDDISNVLSNLSVSDKEVPQKCKDSSDLKCDSPPLSPLN.

Positions 18–90 (NSNIHNNTHN…NNTQNTNNGT (73 aa)) are enriched in low complexity. Disordered stretches follow at residues 18-95 (NSNI…LTPL), 153-173 (LNLS…NNNP), 186-306 (LQSQ…NNNT), 343-372 (DSLL…IQTS), 401-441 (LSSA…NNSN), and 473-507 (ASSE…DEDQ). Composition is skewed to low complexity over residues 186–223 (LQSQ…SSPI), 235–258 (SSPI…STSP), 273–305 (NNNN…LNNN), and 351–366 (NNNN…NNNN). Low complexity predominate over residues 473-483 (ASSESAQSESS). In terms of domain architecture, bZIP spans 549–612 (ELKKQRRLVK…KALKKQLYSL (64 aa)). The basic motif stretch occupies residues 551 to 603 (KKQRRLVKNREYASQSRSRRKIYVENIETKLQKTNQDCASIKSQLNSVKEENK). The leucine-zipper stretch occupies residues 605 to 612 (LKKQLYSL). 2 disordered regions span residues 723-747 (SNYI…VVST) and 763-787 (DKEV…SPLN). Over residues 763 to 778 (DKEVPQKCKDSSDLKC) the composition is skewed to basic and acidic residues.

Belongs to the bZIP family.

The protein resides in the nucleus. Probable transcriptional regulator. This chain is Probable basic-leucine zipper transcription factor J (bzpJ), found in Dictyostelium discoideum (Social amoeba).